The chain runs to 173 residues: Nicotinamide-nucleotide adenylyltransferase (173 aa).

It belongs to the archaeal NMN adenylyltransferase family.

Its subcellular location is the cytoplasm. It carries out the reaction beta-nicotinamide D-ribonucleotide + ATP + H(+) = diphosphate + NAD(+). The protein operates within cofactor biosynthesis; NAD(+) biosynthesis; NAD(+) from nicotinamide D-ribonucleotide: step 1/1. The sequence is that of Nicotinamide-nucleotide adenylyltransferase from Methanosarcina acetivorans (strain ATCC 35395 / DSM 2834 / JCM 12185 / C2A).